A 413-amino-acid polypeptide reads, in one-letter code: Divalent metal cation transporter MntH (413 aa).

The Cytoplasmic portion of the chain corresponds to 1-19 (MTDNRVENSSGRAARKLRL). The chain crosses the membrane as a helical span at residues 20–39 (ALMGPAFIAAIGYIDPGNFA). Over 40 to 51 (TNIQAGASFGYQ) the chain is Periplasmic. Residues 52 to 71 (LLWVVVWANLMAMLIQILSA) form a helical membrane-spanning segment. Topologically, residues 72–95 (KLGIATGKNLAEQIRDHYPRPVVW) are cytoplasmic. Residues 96-118 (FYWVQAEIIAMATDLAEFIGAAI) traverse the membrane as a helical segment. The Periplasmic segment spans residues 119-125 (GFKLILG). The chain crosses the membrane as a helical span at residues 126 to 145 (VSLLQGAVLTGIATFLILML). At 146–155 (QRRGQKPLEK) the chain is on the cytoplasmic side. The helical transmembrane segment at 156 to 175 (VIGGLLLFVAAAYIVELFFS) threads the bilayer. Over 176 to 196 (QPDMAQLGKGMVIPALPNPEA) the chain is Periplasmic. Residues 197-220 (VFLAAGVLGATIMPHVIYLHSSLT) form a helical membrane-spanning segment. Residues 221-238 (QHLHGGTRQQRYSATKWD) are Cytoplasmic-facing. Residues 239-258 (VAIAMTIAGFVNLAMMATAA) form a helical membrane-spanning segment. At 259 to 276 (AAFHFSGHTGIADLDQAY) the chain is on the periplasmic side. The helical transmembrane segment at 277-297 (LTLEPLLSHAAATVFGLSLVA) threads the bilayer. At 298 to 327 (AGLSSTVVGTLAGQVVMQGFVRFHIPLWVR) the chain is on the cytoplasmic side. The helical transmembrane segment at 328–344 (RTITMLPSFIVILMGLD) threads the bilayer. Residues 345-350 (PTRILV) are Periplasmic-facing. Residues 351 to 370 (MSQVLLSFGIALALVPLLIF) form a helical membrane-spanning segment. At 371 to 387 (TSNATLMGELVNTRRVK) the chain is on the cytoplasmic side. The chain crosses the membrane as a helical span at residues 388–406 (QIGWIIVVLVVALNIWLLV). Topologically, residues 407–413 (GTVMGLS) are periplasmic.

The protein belongs to the NRAMP family.

The protein localises to the cell inner membrane. In terms of biological role, h(+)-stimulated, divalent metal cation uptake system. The polypeptide is Divalent metal cation transporter MntH (Salmonella schwarzengrund (strain CVM19633)).